A 776-amino-acid chain; its full sequence is Disintegrin and metalloproteinase domain-containing protein 7 (776 aa).

The N-terminal stretch at 1–23 is a signal peptide; the sequence is MLPGCIFLMILLILQVKEKVILG. Residues 24 to 176 constitute a propeptide that is removed on maturation; that stretch reads VEGQQLVYPK…NYSCTELNFT (153 aa). Topologically, residues 26 to 669 are extracellular; it reads GQQLVYPKKL…WEETLNVTNV (644 aa). 3 N-linked (GlcNAc...) asparagine glycosylation sites follow: asparagine 84, asparagine 167, and asparagine 174. The Peptidase M12B domain maps to 199–394; the sequence is KYIELFIVAD…YKPTCMLNIP (196 aa). 4 disulfide bridges follow: cysteine 310-cysteine 389, cysteine 350-cysteine 373, cysteine 352-cysteine 357, and cysteine 460-cysteine 480. One can recognise a Disintegrin domain in the interval 402 to 488; the sequence is FQFCGNKKLD…ACPKDQFRVN (87 aa). Asparagine 584, asparagine 629, and asparagine 665 each carry an N-linked (GlcNAc...) asparagine glycan. The helical transmembrane segment at 670–690 threads the bilayer; sequence AILIVVLVLVIVGIGVLILLI. The Cytoplasmic portion of the chain corresponds to 691-776; that stretch reads RYQKCIKLKQ…GIADPNQSAK (86 aa). The interval 757–776 is disordered; the sequence is TLKPASKDSRGIADPNQSAK.

Interacts with ITM2B in sperm; the interaction increases following capacitation. Interacts with HSPA5 and CANX.

The protein localises to the membrane. In terms of biological role, required for normal male fertility via maintenance of epithelial cell morphology in the caput epididymis and subsequently correct epididymis lumen structure required for sperm development. Plays a role in sperm motility, flagella morphology and tyrosine phosphorylation during sperm capacitance. Plays a role in normal expression levels of HSPA5, ITM2B and ADAM2 in sperm both prior to and post-capacitation. This is a non catalytic metalloprotease-like protein. This is Disintegrin and metalloproteinase domain-containing protein 7 (ADAM7) from Macaca fascicularis (Crab-eating macaque).